The chain runs to 147 residues: MSFTDKQEALVNSSWEAFKQNLPRYSVFFYTVVLEKAPAAKGLFSFLKNSAEVQDSPQLQAHAEKVFGLVRDSAVQLRATGGVVLGDATLGAIHVRKGVVDPHFVVVKEALLKTIKEAAGDKWSEELNTAWEVAYDALATAIKKAMS.

Residues 2-147 enclose the Globin domain; it reads SFTDKQEALV…LATAIKKAMS (146 aa). Residues tyrosine 25 and tyrosine 30 each carry the nitrated tyrosine modification. Heme b is bound at residue serine 45. Serine 45 is subject to Phosphoserine. O2 is bound at residue histidine 62. Residues lysine 65, histidine 94, and lysine 97 each coordinate heme b. Tyrosine 135 bears the Nitrated tyrosine mark.

Belongs to the plant globin family. As to quaternary structure, monomer. Nitrated in effective nodules and particularly in hypoxic conditions; this mechanism may play a protective role in the symbiosis by buffering toxic peroxynitrite NO(2)(-). Nitration level decrease during nodule senescence. In terms of processing, phosphorylation at Ser-45 disrupts the molecular environment of its porphyrin ring oxygen binding pocket, thus leading to a reduced oxygen consumption and to the delivery of oxygen O(2) to symbiosomes. In terms of tissue distribution, root nodules.

It is found in the cytoplasm. The protein localises to the cytosol. It localises to the nucleus. In terms of biological role, leghemoglobin that reversibly binds oxygen O(2) through a pentacoordinated heme iron. In root nodules, facilitates the diffusion of oxygen to the bacteroids while preventing the bacterial nitrogenase from being inactivated by buffering dioxygen, nitric oxide and carbon monoxide, and promoting the formation of reactive oxygen species (ROS, e.g. H(2)O(2)). This role is essential for symbiotic nitrogen fixation (SNF). The chain is Leghemoglobin-1 from Medicago sativa (Alfalfa).